A 98-amino-acid polypeptide reads, in one-letter code: Citrate lyase acyl carrier protein (98 aa).

Residue Ser-14 is modified to O-(phosphoribosyl dephospho-coenzyme A)serine.

This sequence belongs to the CitD family. As to quaternary structure, oligomer with a subunit composition of (alpha,beta,gamma)6.

The protein localises to the cytoplasm. Covalent carrier of the coenzyme of citrate lyase. This Escherichia coli O81 (strain ED1a) protein is Citrate lyase acyl carrier protein.